Consider the following 180-residue polypeptide: CDP-archaeol synthase (180 aa).

The next 5 membrane-spanning stretches (helical) occupy residues 5–25 (LVAT…AAVL), 54–74 (AVGT…AEPA), 78–98 (LGVD…FGAM), 118–138 (AFPG…VFVV), and 142–162 (WALA…TPIL).

Belongs to the CDP-archaeol synthase family. It depends on Mg(2+) as a cofactor.

The protein resides in the cell membrane. It catalyses the reaction 2,3-bis-O-(geranylgeranyl)-sn-glycerol 1-phosphate + CTP + H(+) = CDP-2,3-bis-O-(geranylgeranyl)-sn-glycerol + diphosphate. Its pathway is membrane lipid metabolism; glycerophospholipid metabolism. Catalyzes the formation of CDP-2,3-bis-(O-geranylgeranyl)-sn-glycerol (CDP-archaeol) from 2,3-bis-(O-geranylgeranyl)-sn-glycerol 1-phosphate (DGGGP) and CTP. This reaction is the third ether-bond-formation step in the biosynthesis of archaeal membrane lipids. The sequence is that of CDP-archaeol synthase from Halorubrum lacusprofundi (strain ATCC 49239 / DSM 5036 / JCM 8891 / ACAM 34).